We begin with the raw amino-acid sequence, 127 residues long: MEIFGNVVSGLGEGRFFVGLTPYKNKFEELTGFIPFEGTLNVKLKHNFNLDNFNPIEFDGFEINGKRYFGGKVLLIKLFNKHGNFVNCAIVAPKKTDHSKKTLEIIAPIQLRKFLSLNNSNVVKIVI.

Residue 10–15 (GLGEGR) coordinates CDP. Mg(2+) is bound by residues T39 and N41. T96 and E104 together coordinate FMN. 109 to 112 (IQLR) lines the CDP pocket.

The protein belongs to the archaeal riboflavin kinase family. Requires Mg(2+) as cofactor.

The enzyme catalyses riboflavin + CTP = CDP + FMN + H(+). It participates in cofactor biosynthesis; FMN biosynthesis; FMN from riboflavin (CTP route): step 1/1. In terms of biological role, catalyzes the CTP-dependent phosphorylation of riboflavin (vitamin B2) to form flavin mononucleotide (FMN). This is Riboflavin kinase from Methanococcus maripaludis (strain C5 / ATCC BAA-1333).